Consider the following 256-residue polypeptide: 5-keto-4-deoxy-D-glucarate aldolase (256 aa).

The active-site Proton acceptor is the histidine 50. Glutamine 151 lines the substrate pocket. Glutamate 153 is a Mg(2+) binding site. Residues serine 178 and aspartate 179 each coordinate substrate. Aspartate 179 contributes to the Mg(2+) binding site.

The protein belongs to the HpcH/HpaI aldolase family. KDGluc aldolase subfamily. As to quaternary structure, homohexamer; trimer of dimers. The cofactor is Mg(2+).

The enzyme catalyses 5-dehydro-4-deoxy-D-glucarate = 2-hydroxy-3-oxopropanoate + pyruvate. It catalyses the reaction 2-dehydro-3-deoxy-D-glucarate = 2-hydroxy-3-oxopropanoate + pyruvate. It participates in carbohydrate acid metabolism; galactarate degradation; D-glycerate from galactarate: step 2/3. Functionally, catalyzes the reversible retro-aldol cleavage of both 5-keto-4-deoxy-D-glucarate and 2-keto-3-deoxy-D-glucarate to pyruvate and tartronic semialdehyde. The chain is 5-keto-4-deoxy-D-glucarate aldolase from Escherichia coli O6:H1 (strain CFT073 / ATCC 700928 / UPEC).